Reading from the N-terminus, the 87-residue chain is Small ribosomal subunit protein bS21 (87 aa).

The segment covering 47 to 63 (YEKPSEKRARQKAEAVR) has biased composition (basic and acidic residues). Residues 47–87 (YEKPSEKRARQKAEAVRRARKLARKRAQREGLLPMPKKPGR) are disordered. The segment covering 64–73 (RARKLARKRA) has biased composition (basic residues).

This sequence belongs to the bacterial ribosomal protein bS21 family.

The sequence is that of Small ribosomal subunit protein bS21 from Caulobacter vibrioides (strain ATCC 19089 / CIP 103742 / CB 15) (Caulobacter crescentus).